The sequence spans 461 residues: UDP-glycosyltransferase 82A1 (461 aa).

UDP-alpha-D-glucose is bound by residues serine 292, 349 to 351 (APQ), 366 to 374 (HCGWNSTME), and 388 to 391 (AGDQ).

This sequence belongs to the UDP-glycosyltransferase family.

The chain is UDP-glycosyltransferase 82A1 (UGT82A1) from Arabidopsis thaliana (Mouse-ear cress).